A 51-amino-acid polypeptide reads, in one-letter code: Large ribosomal subunit protein bL33 (51 aa).

This sequence belongs to the bacterial ribosomal protein bL33 family.

In Acinetobacter baylyi (strain ATCC 33305 / BD413 / ADP1), this protein is Large ribosomal subunit protein bL33.